Here is a 359-residue protein sequence, read N- to C-terminus: Probable cinnamyl alcohol dehydrogenase 8A (359 aa).

Cys-45 contributes to the Zn(2+) binding site. Thr-47 is an NADP(+) binding site. His-67, Glu-68, Cys-98, Cys-101, Cys-104, Cys-112, and Cys-161 together coordinate Zn(2+). Residues Thr-165, 186–191 (GLGGLG), 209–214 (SSSPAK), Thr-249, Gly-273, and 296–298 (SGG) contribute to the NADP(+) site.

The protein belongs to the zinc-containing alcohol dehydrogenase family. Homodimer. Requires Zn(2+) as cofactor.

It carries out the reaction (E)-cinnamyl alcohol + NADP(+) = (E)-cinnamaldehyde + NADPH + H(+). The catalysed reaction is (E)-coniferol + NADP(+) = (E)-coniferaldehyde + NADPH + H(+). The enzyme catalyses (E)-sinapyl alcohol + NADP(+) = (E)-sinapaldehyde + NADPH + H(+). It catalyses the reaction (E)-4-coumaroyl alcohol + NADP(+) = (E)-4-coumaraldehyde + NADPH + H(+). It carries out the reaction (E)-caffeyl alcohol + NADP(+) = (E)-caffeyl aldehyde + NADPH + H(+). It participates in aromatic compound metabolism; phenylpropanoid biosynthesis. In terms of biological role, involved in lignin biosynthesis. Catalyzes the final step specific for the production of lignin monomers. Catalyzes the NADPH-dependent reduction of coniferaldehyde, 5-hydroxyconiferaldehyde, sinapaldehyde, 4-coumaraldehyde and caffeyl aldehyde to their respective alcohols. This Oryza sativa subsp. japonica (Rice) protein is Probable cinnamyl alcohol dehydrogenase 8A.